The primary structure comprises 482 residues: uncharacterized protein (482 aa).

12 helical membrane passes run 40 to 57 (LDWY…LSFL), 83 to 103 (AAVS…VLLV), 109 to 129 (HYYL…TCFV), 140 to 160 (LLLG…ISMT), 170 to 190 (LAYL…IATG), 205 to 225 (WLYI…LFCL), 278 to 298 (VIQF…PSIL), 311 to 331 (YMSV…CLLS), 338 to 358 (GWFI…LLAT), 366 to 386 (VATY…ITWI), 399 to 418 (ALGC…GQVY), and 428 to 448 (GFAL…RFYL).

It belongs to the major facilitator superfamily. Allantoate permease family.

The protein localises to the endoplasmic reticulum. Its subcellular location is the membrane. This is an uncharacterized protein from Schizosaccharomyces pombe (strain 972 / ATCC 24843) (Fission yeast).